The sequence spans 166 residues: UPF0336 protein ML1908 (166 aa).

Belongs to the UPF0336 family.

The sequence is that of UPF0336 protein ML1908 from Mycobacterium leprae (strain TN).